Here is a 149-residue protein sequence, read N- to C-terminus: Large ribosomal subunit protein eL24A (149 aa).

2 stretches are compositionally biased toward basic and acidic residues: residues 93–102 and 116–125; these read KRNQRPEVRA and KAASESEKKA. The segment at 93-149 is disordered; that stretch reads KRNQRPEVRAAARAAALKQRKDKKAASESEKKAIKAKSAASSARGQAIKNAKAAARH.

Belongs to the eukaryotic ribosomal protein eL24 family. Component of the large ribosomal subunit (LSU). Mature yeast ribosomes consist of a small (40S) and a large (60S) subunit. The 40S small subunit contains 1 molecule of ribosomal RNA (18S rRNA) and at least 33 different proteins. The large 60S subunit contains 3 rRNA molecules (25S, 5.8S and 5S rRNA) and at least 46 different proteins.

The protein localises to the cytoplasm. Functionally, component of the ribosome, a large ribonucleoprotein complex responsible for the synthesis of proteins in the cell. The small ribosomal subunit (SSU) binds messenger RNAs (mRNAs) and translates the encoded message by selecting cognate aminoacyl-transfer RNA (tRNA) molecules. The large subunit (LSU) contains the ribosomal catalytic site termed the peptidyl transferase center (PTC), which catalyzes the formation of peptide bonds, thereby polymerizing the amino acids delivered by tRNAs into a polypeptide chain. The nascent polypeptides leave the ribosome through a tunnel in the LSU and interact with protein factors that function in enzymatic processing, targeting, and the membrane insertion of nascent chains at the exit of the ribosomal tunnel. This chain is Large ribosomal subunit protein eL24A (rpl2401), found in Schizosaccharomyces pombe (strain 972 / ATCC 24843) (Fission yeast).